The sequence spans 714 residues: BRCA1-associated RING domain protein 1 (714 aa).

An RING-type zinc finger spans residues 25–63 (CPLCLKLLNRPVLLPCDHVFCDSCVHKSSQVESGCPVCK). Disordered regions lie at residues 106 to 165 (YKND…QDWT) and 254 to 283 (KAQN…DAME). Basic and acidic residues predominate over residues 118–134 (KHGESEDSEMTDKDVSK). Over residues 135–147 (RSGGTDSSSRDGS) the composition is skewed to low complexity. Composition is skewed to basic and acidic residues over residues 155 to 165 (SDPRPKHQDWT) and 264 to 283 (SHTE…DAME). The C2HC pre-PHD-type zinc finger occupies 331–382 (ITICGFCQSARVSEATGEMLHYSRGRPVDGDDIFRSNVIHVHSACIEWAPQV). Residues 402 to 451 (IKCTKCSLKGAALGCFVKSCRRSYHVPCAREISRCRWDYEDFLLLCPAHS) form a PHD-type zinc finger. BRCT domains lie at 482 to 577 (EQTP…PFEI) and 598 to 713 (NKPK…HPVI).

Component of a DNA-protein complex on WUS and WOX5 promoters. Interacts with SYD. Forms heterodimer with BRCA1. In terms of tissue distribution, expressed in the shoot apical meristem (SAM), roots, flowers, embryos and seedlings. Mostly expressed in flowers and siliques, and, to a lower extent, in roots, rosette leaves, inflorescence and young cauline leaves.

It is found in the nucleus. Binds specifically to H3K4me3 regions of target genes (e.g. WUS and WOX5) promoters to repress their transcription via chromatin remodeling. Required for the shoot apical meristem (SAM) organization and maintenance, by confining WUS expression to the organizing center, and for the quiescent center (QC) development in the root apical meristem (RAM), by repressing WOX5 expression in the root proximal meristem. Plays a role in DNA repair and in cell-cycle control. Required for the repair of DNA double-strand breaks (DSBs), both natural and induced by genotoxic stress, by homologous recombination (HR). This is BRCA1-associated RING domain protein 1 from Arabidopsis thaliana (Mouse-ear cress).